We begin with the raw amino-acid sequence, 356 residues long: Dihydroorotate dehydrogenase (quinone) (356 aa).

FMN is bound by residues 66-70 and threonine 90; that span reads AGFDK. Lysine 70 contacts substrate. 115 to 119 lines the substrate pocket; that stretch reads NRMGF. FMN contacts are provided by asparagine 143 and asparagine 176. Asparagine 176 serves as a coordination point for substrate. The active-site Nucleophile is serine 179. Residue asparagine 181 coordinates substrate. 2 residues coordinate FMN: lysine 212 and threonine 240. A substrate-binding site is contributed by 241 to 242; that stretch reads NT. FMN-binding positions include glycine 266, glycine 295, and 316–317; that span reads YT.

It belongs to the dihydroorotate dehydrogenase family. Type 2 subfamily. Monomer. FMN is required as a cofactor.

It is found in the cell membrane. It catalyses the reaction (S)-dihydroorotate + a quinone = orotate + a quinol. It participates in pyrimidine metabolism; UMP biosynthesis via de novo pathway; orotate from (S)-dihydroorotate (quinone route): step 1/1. Its function is as follows. Catalyzes the conversion of dihydroorotate to orotate with quinone as electron acceptor. The polypeptide is Dihydroorotate dehydrogenase (quinone) (Rhodococcus opacus (strain B4)).